Here is a 314-residue protein sequence, read N- to C-terminus: Porphobilinogen deaminase (314 aa).

Cys-242 carries the S-(dipyrrolylmethanemethyl)cysteine modification.

The protein belongs to the HMBS family. In terms of assembly, monomer. Dipyrromethane serves as cofactor.

It carries out the reaction 4 porphobilinogen + H2O = hydroxymethylbilane + 4 NH4(+). It functions in the pathway porphyrin-containing compound metabolism; protoporphyrin-IX biosynthesis; coproporphyrinogen-III from 5-aminolevulinate: step 2/4. Tetrapolymerization of the monopyrrole PBG into the hydroxymethylbilane pre-uroporphyrinogen in several discrete steps. The chain is Porphobilinogen deaminase (hemC) from Bacillus subtilis (strain 168).